The primary structure comprises 93 residues: Protein LSO1 (93 aa).

Residues 1-73 (MHNTGKRYSE…TEKLRAKKER (73 aa)) are disordered. The stretch at 20–83 (ARKRRQAYEK…DQLLAAEEEA (64 aa)) forms a coiled coil. Basic and acidic residues-rich tracts occupy residues 25–49 (QAYE…EEGA) and 57–73 (LIME…KKER).

The protein localises to the nucleus. It is found in the cytoplasm. Likely to play a role in iron homeostasis. The protein is Protein LSO1 of Saccharomyces cerevisiae (strain ATCC 204508 / S288c) (Baker's yeast).